Reading from the N-terminus, the 642-residue chain is Threonine--tRNA ligase (642 aa).

A TGS domain is found at 1-61 (MPVIRFYDGS…REDAFIEFVD (61 aa)). The catalytic stretch occupies residues 243–534 (DHRKIGKFLQ…LIEECSGNLP (292 aa)). Zn(2+) contacts are provided by cysteine 334, histidine 385, and histidine 511.

Belongs to the class-II aminoacyl-tRNA synthetase family. In terms of assembly, homodimer. It depends on Zn(2+) as a cofactor.

Its subcellular location is the cytoplasm. It catalyses the reaction tRNA(Thr) + L-threonine + ATP = L-threonyl-tRNA(Thr) + AMP + diphosphate + H(+). Its function is as follows. Catalyzes the attachment of threonine to tRNA(Thr) in a two-step reaction: L-threonine is first activated by ATP to form Thr-AMP and then transferred to the acceptor end of tRNA(Thr). Also edits incorrectly charged L-seryl-tRNA(Thr). In Buchnera aphidicola subsp. Acyrthosiphon pisum (strain APS) (Acyrthosiphon pisum symbiotic bacterium), this protein is Threonine--tRNA ligase.